Reading from the N-terminus, the 782-residue chain is Anoctamin-9 (782 aa).

Over 1 to 198 (MQGEESLRIL…LYFVWLGWYT (198 aa)) the chain is Cytoplasmic. A helical transmembrane segment spans residues 199–219 (YMLVPAALTGLLVFLSGFSLF). Residues 220 to 264 (EASQISKEICEAHDILMCPLGDHSRRYQRLSETCTFAKLTHLFDN) are Extracellular-facing. Ser250 is modified (phosphoserine; by PKA). A helical membrane pass occupies residues 265-285 (DGTVVFAIFMALWATVFLEIW). Over 286–331 (KRQRARVVLHWDLYVWDEEQEEMALQLINCPDYKLRPYQHSYLRST) the chain is Cytoplasmic. Residues 332–352 (VILVLTLLMICLMIGMAHVLV) form a helical membrane-spanning segment. Over 353–373 (VYRVLASALFSSSAVPFLEEQ) the chain is Extracellular. The chain crosses the membrane as a helical span at residues 374 to 394 (VTTAVVVTGALVHYVTIIIMT). Over 395–423 (KINRCVALKLCDFEMPRTFSERESRFTIR) the chain is Cytoplasmic. The helical transmembrane segment at 424 to 444 (FFTLQFFTHFSSLIYIAFILG) threads the bilayer. At 445 to 552 (RINGHPGKST…EMMIQYGFTT (108 aa)) the chain is on the extracellular side. Residues 553–573 (IFVAAFPLAPLLALFSNLVEI) traverse the membrane as a helical segment. The Cytoplasmic portion of the chain corresponds to 574–604 (RLDAIKMVWLQRRLVPRKAKDIGTWLQVLET). The helical transmembrane segment at 605–625 (IGVLAVIANGMVIAFTSEFIP) threads the bilayer. Residues 626-703 (RVVYKYRYSP…QFWFLLAIRL (78 aa)) are Extracellular-facing. N-linked (GlcNAc...) asparagine glycans are attached at residues Asn641, Asn652, Asn674, and Asn690. A helical membrane pass occupies residues 704–724 (AFVILFEHVALCIKLIAAWFV). Topologically, residues 725–782 (PDIPQSVKNKVLEVKYQRLREKMWHGRQRLGGVGAGSRPPMPAHPTPASIFSARSTDV) are cytoplasmic. Residues 756–782 (GVGAGSRPPMPAHPTPASIFSARSTDV) are disordered.

The protein belongs to the anoctamin family. Phosphorylated on serine residues by cAMP-dependent protein kinase A (PKA) which is essential for activation of its cation channel activity. Expressed in the kidney. Expressed in the olfactory epithelium.

The protein localises to the cell membrane. The protein resides in the endoplasmic reticulum. It carries out the reaction a 1,2-diacyl-sn-glycero-3-phospho-L-serine(in) = a 1,2-diacyl-sn-glycero-3-phospho-L-serine(out). It catalyses the reaction a beta-D-galactosyl-(1&lt;-&gt;1')-N-acylsphing-4-enine(out) = a beta-D-galactosyl-(1&lt;-&gt;1')-N-acylsphing-4-enine(in). The catalysed reaction is a 1,2-diacyl-sn-glycero-3-phosphocholine(in) = a 1,2-diacyl-sn-glycero-3-phosphocholine(out). The enzyme catalyses Ca(2+)(in) = Ca(2+)(out). It carries out the reaction Na(+)(in) = Na(+)(out). It catalyses the reaction K(+)(in) = K(+)(out). Cation channel activity is activated via phosphorylation on serine residues by cAMP-dependent protein kinase A (PKA). In terms of biological role, PKA-activated nonselective cation channel. Discriminates poorly among cations but is more permeable to Ca(2+) ions than to monovalent cations. Acts as a calcium-activated calcium permeable channel which may operate as a endoplasmic reticulum (ER) Ca(2+)-leak channel, reducing the loading of the ER Ca(2+) store. Regulates intracellular Ca2+ signals, ion channel activity, and cytokine release in the renal tissue. Plays an important role in olfaction, amplifying cAMP-evoked cyclic nucleotide-gated (CNG) channel currents in the olfactory sensory neurons. Has calcium-dependent phospholipid scramblase activity; scrambles phosphatidylserine, phosphatidylcholine and galactosylceramide. Does not exhibit calcium-activated chloride channel (CaCC) activity. Can inhibit the activity of ANO1. The protein is Anoctamin-9 (ANO9) of Homo sapiens (Human).